Here is a 218-residue protein sequence, read N- to C-terminus: ATP-dependent dethiobiotin synthetase BioD (218 aa).

Residue 9–15 coordinates ATP; that stretch reads TNAGKTT. T14 contributes to the Mg(2+) binding site. The active site involves K35. Residue K35 coordinates phosphate. T39 is a binding site for substrate. ATP contacts are provided by residues D50, E116, and 116 to 119; that span reads EGAG. Positions 50 and 116 each coordinate Mg(2+). 116-119 serves as a coordination point for phosphate; sequence EGAG. 151 to 154 contributes to the substrate binding site; the sequence is GLIN. Residues N175 and 175–177 each bind ATP; that span reads NLK.

This sequence belongs to the dethiobiotin synthetase family. In terms of assembly, homodimer. Mg(2+) serves as cofactor.

The protein localises to the cytoplasm. It catalyses the reaction (7R,8S)-7,8-diammoniononanoate + CO2 + ATP = (4R,5S)-dethiobiotin + ADP + phosphate + 3 H(+). It participates in cofactor biosynthesis; biotin biosynthesis; biotin from 7,8-diaminononanoate: step 1/2. Catalyzes a mechanistically unusual reaction, the ATP-dependent insertion of CO2 between the N7 and N8 nitrogen atoms of 7,8-diaminopelargonic acid (DAPA, also called 7,8-diammoniononanoate) to form a ureido ring. In Helicobacter pylori (strain ATCC 700392 / 26695) (Campylobacter pylori), this protein is ATP-dependent dethiobiotin synthetase BioD.